Reading from the N-terminus, the 312-residue chain is Malate dehydrogenase (312 aa).

Residues Gly7–Gly13 and Asp34 each bind NAD(+). Substrate contacts are provided by Arg81 and Arg87. NAD(+) contacts are provided by residues Asn94 and Ile117–Asn119. Substrate-binding residues include Asn119 and Arg153. Catalysis depends on His177, which acts as the Proton acceptor. Met227 contributes to the NAD(+) binding site.

It belongs to the LDH/MDH superfamily. MDH type 1 family. As to quaternary structure, homodimer.

It catalyses the reaction (S)-malate + NAD(+) = oxaloacetate + NADH + H(+). In terms of biological role, catalyzes the reversible oxidation of malate to oxaloacetate. The chain is Malate dehydrogenase from Salmonella newport (strain SL254).